A 285-amino-acid polypeptide reads, in one-letter code: Glycine--tRNA ligase alpha subunit (285 aa).

This sequence belongs to the class-II aminoacyl-tRNA synthetase family. In terms of assembly, tetramer of two alpha and two beta subunits.

It localises to the cytoplasm. The catalysed reaction is tRNA(Gly) + glycine + ATP = glycyl-tRNA(Gly) + AMP + diphosphate. The chain is Glycine--tRNA ligase alpha subunit from Granulibacter bethesdensis (strain ATCC BAA-1260 / CGDNIH1).